A 332-amino-acid chain; its full sequence is 2,3-diketo-L-gulonate reductase (332 aa).

His-44 functions as the Proton donor in the catalytic mechanism. Residues 168-174 (ITMVDMS), 224-225 (WK), and 304-306 (GHE) contribute to the NAD(+) site.

The protein belongs to the LDH2/MDH2 oxidoreductase family. DlgD subfamily. Homodimer.

The protein localises to the cytoplasm. The enzyme catalyses 3-dehydro-L-gulonate + NAD(+) = 2,3-dioxo-L-gulonate + NADH + H(+). The catalysed reaction is 3-dehydro-L-gulonate + NADP(+) = 2,3-dioxo-L-gulonate + NADPH + H(+). Functionally, catalyzes the reduction of 2,3-diketo-L-gulonate in the presence of NADH, to form 3-keto-L-gulonate. The chain is 2,3-diketo-L-gulonate reductase from Escherichia fergusonii (strain ATCC 35469 / DSM 13698 / CCUG 18766 / IAM 14443 / JCM 21226 / LMG 7866 / NBRC 102419 / NCTC 12128 / CDC 0568-73).